The chain runs to 1071 residues: DNA-directed RNA polymerase subunit beta (1071 aa).

It belongs to the RNA polymerase beta chain family. As to quaternary structure, in plastids the minimal PEP RNA polymerase catalytic core is composed of four subunits: alpha, beta, beta', and beta''. When a (nuclear-encoded) sigma factor is associated with the core the holoenzyme is formed, which can initiate transcription.

Its subcellular location is the plastid. It is found in the chloroplast. The catalysed reaction is RNA(n) + a ribonucleoside 5'-triphosphate = RNA(n+1) + diphosphate. Functionally, DNA-dependent RNA polymerase catalyzes the transcription of DNA into RNA using the four ribonucleoside triphosphates as substrates. The polypeptide is DNA-directed RNA polymerase subunit beta (Acorus gramineus (Dwarf sweet flag)).